Reading from the N-terminus, the 502-residue chain is Protein ANKUB1 (502 aa).

The polypeptide is Protein ANKUB1 (ANKUB1) (Homo sapiens (Human)).